The chain runs to 368 residues: Chorismate synthase (368 aa).

2 residues coordinate NADP(+): Arg48 and Arg54. FMN is bound by residues 125–127 (RSS), 238–239 (NA), Gly278, 293–297 (KPTSS), and Arg319.

This sequence belongs to the chorismate synthase family. As to quaternary structure, homotetramer. FMNH2 is required as a cofactor.

It catalyses the reaction 5-O-(1-carboxyvinyl)-3-phosphoshikimate = chorismate + phosphate. It participates in metabolic intermediate biosynthesis; chorismate biosynthesis; chorismate from D-erythrose 4-phosphate and phosphoenolpyruvate: step 7/7. Functionally, catalyzes the anti-1,4-elimination of the C-3 phosphate and the C-6 proR hydrogen from 5-enolpyruvylshikimate-3-phosphate (EPSP) to yield chorismate, which is the branch point compound that serves as the starting substrate for the three terminal pathways of aromatic amino acid biosynthesis. This reaction introduces a second double bond into the aromatic ring system. The chain is Chorismate synthase from Methylibium petroleiphilum (strain ATCC BAA-1232 / LMG 22953 / PM1).